The sequence spans 633 residues: Probable potassium transport system protein Kup (633 aa).

The next 12 membrane-spanning stretches (helical) occupy residues 21 to 41 (MLVA…LYTL), 61 to 81 (ILSL…MMFV), 112 to 132 (LLVV…MITP), 149 to 169 (GIDH…FLIQ), 176 to 196 (IGIL…ALGV), 217 to 237 (FFMV…LALT), 258 to 278 (WFLL…ALLL), 290 to 310 (LLAP…ATVI), 348 to 368 (IYIG…VIGF), 377 to 397 (AYGV…SAVM), 398 to 418 (LLLW…FLLV), and 430 to 450 (IVQG…LMTT).

It belongs to the HAK/KUP transporter (TC 2.A.72) family.

It localises to the cell inner membrane. It carries out the reaction K(+)(in) + H(+)(in) = K(+)(out) + H(+)(out). Transport of potassium into the cell. Likely operates as a K(+):H(+) symporter. In Pseudomonas fluorescens (strain Pf0-1), this protein is Probable potassium transport system protein Kup.